The primary structure comprises 132 residues: Small ribosomal subunit protein uS8 (132 aa).

The protein belongs to the universal ribosomal protein uS8 family. As to quaternary structure, part of the 30S ribosomal subunit. Contacts proteins S5 and S12.

Its function is as follows. One of the primary rRNA binding proteins, it binds directly to 16S rRNA central domain where it helps coordinate assembly of the platform of the 30S subunit. The protein is Small ribosomal subunit protein uS8 of Roseiflexus castenholzii (strain DSM 13941 / HLO8).